Reading from the N-terminus, the 489-residue chain is tRNA(Ile)-lysidine synthase (489 aa).

35–40 (SGGLDS) provides a ligand contact to ATP.

The protein belongs to the tRNA(Ile)-lysidine synthase family.

It is found in the cytoplasm. The catalysed reaction is cytidine(34) in tRNA(Ile2) + L-lysine + ATP = lysidine(34) in tRNA(Ile2) + AMP + diphosphate + H(+). Functionally, ligates lysine onto the cytidine present at position 34 of the AUA codon-specific tRNA(Ile) that contains the anticodon CAU, in an ATP-dependent manner. Cytidine is converted to lysidine, thus changing the amino acid specificity of the tRNA from methionine to isoleucine. The polypeptide is tRNA(Ile)-lysidine synthase (Burkholderia mallei (strain ATCC 23344)).